The sequence spans 424 residues: 5-methylthioadenosine/S-adenosylhomocysteine deaminase (424 aa).

His-60 and His-62 together coordinate Zn(2+). Glu-89 and His-181 together coordinate substrate. A Zn(2+)-binding site is contributed by His-208. Glu-211 and Asp-296 together coordinate substrate. Asp-296 serves as a coordination point for Zn(2+).

The protein belongs to the metallo-dependent hydrolases superfamily. MTA/SAH deaminase family. Zn(2+) is required as a cofactor.

The catalysed reaction is S-adenosyl-L-homocysteine + H2O + H(+) = S-inosyl-L-homocysteine + NH4(+). The enzyme catalyses S-methyl-5'-thioadenosine + H2O + H(+) = S-methyl-5'-thioinosine + NH4(+). Its function is as follows. Catalyzes the deamination of 5-methylthioadenosine and S-adenosyl-L-homocysteine into 5-methylthioinosine and S-inosyl-L-homocysteine, respectively. Is also able to deaminate adenosine. This chain is 5-methylthioadenosine/S-adenosylhomocysteine deaminase, found in Thermococcus kodakarensis (strain ATCC BAA-918 / JCM 12380 / KOD1) (Pyrococcus kodakaraensis (strain KOD1)).